We begin with the raw amino-acid sequence, 202 residues long: Small ribosomal subunit protein uS3 (202 aa).

The region spanning 18-87 (LNEYLQRQLV…NPQIDVVEVP (70 aa)) is the KH type-2 domain.

Belongs to the universal ribosomal protein uS3 family. Part of the 30S ribosomal subunit.

Functionally, binds the lower part of the 30S subunit head. The polypeptide is Small ribosomal subunit protein uS3 (Thermofilum pendens (strain DSM 2475 / Hrk 5)).